The primary structure comprises 45 residues: Photosystem II reaction center protein K (45 aa).

The propeptide occupies 1-8 (MNSALFLA). Residues 23–43 (ILPVIPVFFLLLAFVWQAAIG) form a helical membrane-spanning segment.

This sequence belongs to the PsbK family. As to quaternary structure, PSII is composed of 1 copy each of membrane proteins PsbA, PsbB, PsbC, PsbD, PsbE, PsbF, PsbH, PsbI, PsbJ, PsbK, PsbL, PsbM, PsbT, PsbX, PsbY, PsbZ, Psb30/Ycf12, at least 3 peripheral proteins of the oxygen-evolving complex and a large number of cofactors. It forms dimeric complexes.

The protein resides in the plastid. It is found in the chloroplast thylakoid membrane. In terms of biological role, one of the components of the core complex of photosystem II (PSII). PSII is a light-driven water:plastoquinone oxidoreductase that uses light energy to abstract electrons from H(2)O, generating O(2) and a proton gradient subsequently used for ATP formation. It consists of a core antenna complex that captures photons, and an electron transfer chain that converts photonic excitation into a charge separation. In Porphyra purpurea (Red seaweed), this protein is Photosystem II reaction center protein K.